The chain runs to 229 residues: uncharacterized protein (229 aa).

Residues 66–94 (GHEKLQIQSALRDIESAENQARVQQCNAK) adopt a coiled-coil conformation.

This is an uncharacterized protein from Ostreid herpesvirus 1 (isolate France) (OsHV-1).